The sequence spans 349 residues: Protein RAE1 (349 aa).

The tract at residues 1–21 (MATFGAPATANSNPNKSYEVT) is disordered. Alanine 2 carries the N-acetylalanine modification. The segment covering 9–21 (TANSNPNKSYEVT) has biased composition (polar residues). WD repeat units follow at residues 23–62 (SPADSISSLSFSPRADILVATSWDNQVRCWEISRSGASLA), 70–109 (SHDQPVLCSAWKDDGTTVFSGGCDKQAKMWPLLSGGQPVT), 112–151 (MHEGPIAAMAWIPGMNLLATGSWDKTLKYWDTRQQNPVHT), 153–190 (QLPDKCYTLSVKHPLMVVGTADRNLIVFNLQNPQTEFK), and 244–283 (NDIYSVNSLNFHPVHGTFATAGSDGAFNFWDKDSKQRLKA). A DWD box motif is present at residues 128–144 (LLATGSWDKTLKYWDTR).

This sequence belongs to the WD repeat rae1 family. Part of the nuclear pore complex (NPC). The NPC has an eight-fold symmetrical structure comprising a central transport channel and two rings, the cytoplasmic and nuclear rings, to which eight filaments are attached. The cytoplasmic filaments have loose ends, while the nuclear filaments are joined in a distal ring, forming a nuclear basket. NPCs are highly dynamic in configuration and composition, and can be devided in 3 subcomplexes, the NUP62 subcomplex, the NUP107-160 subcomplex and the NUP93 subcomplex, containing approximately 30 different nucleoporin proteins. Interacts with DDB1A.

Its subcellular location is the nucleus envelope. The protein resides in the nucleus. It is found in the nuclear pore complex. The polypeptide is Protein RAE1 (Arabidopsis thaliana (Mouse-ear cress)).